Here is a 417-residue protein sequence, read N- to C-terminus: Histidine--tRNA ligase (417 aa).

The protein belongs to the class-II aminoacyl-tRNA synthetase family. In terms of assembly, homodimer.

The protein resides in the cytoplasm. It carries out the reaction tRNA(His) + L-histidine + ATP = L-histidyl-tRNA(His) + AMP + diphosphate + H(+). The chain is Histidine--tRNA ligase from Acetivibrio thermocellus (strain ATCC 27405 / DSM 1237 / JCM 9322 / NBRC 103400 / NCIMB 10682 / NRRL B-4536 / VPI 7372) (Clostridium thermocellum).